A 182-amino-acid chain; its full sequence is ATP synthase subunit delta, organellar chromatophore (182 aa).

This sequence belongs to the ATPase delta chain family. In terms of assembly, F-type ATPases have 2 components, F(1) - the catalytic core - and F(0) - the membrane proton channel. F(1) has five subunits: alpha(3), beta(3), gamma(1), delta(1), epsilon(1). CF(0) has four main subunits: a(1), b(1), b'(1) and c(10-14). The alpha and beta chains form an alternating ring which encloses part of the gamma chain. F(1) is attached to F(0) by a central stalk formed by the gamma and epsilon chains, while a peripheral stalk is formed by the delta, b and b' chains.

The protein localises to the plastid. Its subcellular location is the organellar chromatophore thylakoid membrane. Functionally, f(1)F(0) ATP synthase produces ATP from ADP in the presence of a proton or sodium gradient. F-type ATPases consist of two structural domains, F(1) containing the extramembraneous catalytic core and F(0) containing the membrane proton channel, linked together by a central stalk and a peripheral stalk. During catalysis, ATP synthesis in the catalytic domain of F(1) is coupled via a rotary mechanism of the central stalk subunits to proton translocation. This protein is part of the stalk that links CF(0) to CF(1). It either transmits conformational changes from CF(0) to CF(1) or is implicated in proton conduction. This Paulinella chromatophora protein is ATP synthase subunit delta, organellar chromatophore.